Reading from the N-terminus, the 283-residue chain is MEPPGDWGPPPWRSTPKTDVLRLVLYLTFLGAPCYAPALPSCKEDEYPVGSECCPKCSPGYRVKEACGELTGTVCEPCPPGTYIAHLNGLSKCLQCQMCDPAMGLRASRNCSRTENAVCGCSPGHFCIVQDGDHCAACRAYATSSPGQRVQKGGTESQDTLCQNCPPGTFSPNGTLEECQHQTKCSWLVTKAGAGTSSSHWVWWFLSGSLVIVIVCSTVGLIICVKRRKPRGDVVKVIVSVQRKRQEAEGEATVIEALQAPPDVTTVAVEETIPSFTGRSPNH.

The N-terminal stretch at 1-38 (MEPPGDWGPPPWRSTPKTDVLRLVLYLTFLGAPCYAPA) is a signal peptide. Over 39 to 202 (LPSCKEDEYP…GAGTSSSHWV (164 aa)) the chain is Extracellular. Intrachain disulfides connect Cys-42-Cys-53, Cys-54-Cys-67, Cys-57-Cys-75, Cys-78-Cys-93, Cys-96-Cys-111, Cys-99-Cys-119, Cys-121-Cys-138, and Cys-127-Cys-135. TNFR-Cys repeat units follow at residues 42–75 (CKEDEYPVGSECCPKCSPGYRVKEACGELTGTVC), 78–119 (CPPG…NAVC), and 121–162 (CSPG…DTLC). An N-linked (GlcNAc...) asparagine glycan is attached at Asn-110. Asn-173 is a glycosylation site (N-linked (GlcNAc...) asparagine). A helical transmembrane segment spans residues 203–223 (WWFLSGSLVIVIVCSTVGLII). The Cytoplasmic segment spans residues 224 to 283 (CVKRRKPRGDVVKVIVSVQRKRQEAEGEATVIEALQAPPDVTTVAVEETIPSFTGRSPNH). A Phosphoserine modification is found at Ser-240.

This sequence belongs to the tumor necrosis factor receptor superfamily. In terms of assembly, interacts with TRAF2, TRAF3 and TRAF5. Interacts (via CRD1/TNFR-Cys 1) with CD160; this interaction is direct. Interacts with LTA and TNFSF14. Interacts (via CRD1/TNFR-Cys 1) in cis and trans with BTLA; the cis interactions inhibits the trans interactions. (Microbial infection) Interacts with herpes simplex virus 1/HHV-1 envelope glycoprotein D. As to quaternary structure, (Microbial infection) Interacts with herpes simplex virus 2/HHV-2 envelope glycoprotein D. Post-translationally, N-glycosylated. In terms of tissue distribution, widely expressed, with the highest expression in lung, spleen and thymus. Expressed in a subpopulation of B cells and monocytes. Expressed in naive T cells.

The protein localises to the cell membrane. Functionally, receptor for four distinct ligands: The TNF superfamily members TNFSF14/LIGHT and homotrimeric LTA/lymphotoxin-alpha and the immunoglobulin superfamily members BTLA and CD160, altogether defining a complex stimulatory and inhibitory signaling network. Signals via the TRAF2-TRAF3 E3 ligase pathway to promote immune cell survival and differentiation. Participates in bidirectional cell-cell contact signaling between antigen presenting cells and lymphocytes. In response to ligation of TNFSF14/LIGHT, delivers costimulatory signals to T cells, promoting cell proliferation and effector functions. Interacts with CD160 on NK cells, enhancing IFNG production and anti-tumor immune response. In the context of bacterial infection, acts as a signaling receptor on epithelial cells for CD160 from intraepithelial lymphocytes, triggering the production of antimicrobial proteins and pro-inflammatory cytokines. Upon binding to CD160 on activated CD4+ T cells, down-regulates CD28 costimulatory signaling, restricting memory and alloantigen-specific immune response. May interact in cis (on the same cell) or in trans (on other cells) with BTLA. In cis interactions, appears to play an immune regulatory role inhibiting in trans interactions in naive T cells to maintain a resting state. In trans interactions, can predominate during adaptive immune response to provide survival signals to effector T cells. In terms of biological role, (Microbial infection) Acts as a receptor for Herpes simplex virus 1/HHV-1. Its function is as follows. (Microbial infection) Acts as a receptor for Herpes simplex virus 2/HHV-2. This Homo sapiens (Human) protein is Tumor necrosis factor receptor superfamily member 14.